The chain runs to 205 residues: MSEIKLNYHKTHFLTSAPNIRSIPEDTGIEIAFAGRSNAGKSTALNALTNQKNLARTSKTPGRTQLINLFEVEPNYKLVDLPGYGYAAVPEQMKIQWQKSLGEYLQKRECLSGLVVLMDIRHPLKDLDQQMIEWAVSADLPILLLLTKADKLSQSARSKQVKMVREAILPFQGDIQVEAFSAQNKIGIDKLAAKLDFWFSPLFAK.

In terms of domain architecture, EngB-type G spans 27–201 (TGIEIAFAGR…AAKLDFWFSP (175 aa)). GTP contacts are provided by residues 35-42 (GRSNAGKS), 62-66 (GRTQL), 80-83 (DLPG), 147-150 (TKAD), and 180-182 (FSA). Positions 42 and 64 each coordinate Mg(2+).

It belongs to the TRAFAC class TrmE-Era-EngA-EngB-Septin-like GTPase superfamily. EngB GTPase family. Requires Mg(2+) as cofactor.

Functionally, necessary for normal cell division and for the maintenance of normal septation. In Haemophilus influenzae (strain PittEE), this protein is Probable GTP-binding protein EngB.